Here is a 624-residue protein sequence, read N- to C-terminus: Chaperone protein HtpG (624 aa).

Residues Met-1–Arg-336 form an a; substrate-binding region. Residues Glu-337 to Lys-552 form a b region. The tract at residues Leu-553–Ser-624 is c.

This sequence belongs to the heat shock protein 90 family. As to quaternary structure, homodimer.

The protein localises to the cytoplasm. Its function is as follows. Molecular chaperone. Has ATPase activity. The polypeptide is Chaperone protein HtpG (Salmonella paratyphi B (strain ATCC BAA-1250 / SPB7)).